The sequence spans 443 residues: Phosphatidate cytidylyltransferase 2 (443 aa).

The segment covering 1 to 38 has biased composition (basic and acidic residues); sequence MTELRQRAVREDAPPEDKESESEAKLDGETASDSESRA. The disordered stretch occupies residues 1-51; that stretch reads MTELRQRAVREDAPPEDKESESEAKLDGETASDSESRAETAPPPTSIDDTP. Position 20 is a phosphoserine (Ser20). Position 30 is a phosphothreonine (Thr30). 3 positions are modified to phosphoserine: Ser32, Ser34, and Ser36. A Phosphothreonine modification is found at Thr50. 6 helical membrane-spanning segments follow: residues 78 to 98, 129 to 149, 165 to 185, 212 to 232, 261 to 281, and 338 to 358; these read MIAF…MIVM, WYFL…DYFF, HRFI…LSLV, LVIH…SCVI, GFIG…YVMS, and SALS…ASGF.

This sequence belongs to the CDS family. As to quaternary structure, homodimer.

The protein localises to the endoplasmic reticulum membrane. The enzyme catalyses a 1,2-diacyl-sn-glycero-3-phosphate + CTP + H(+) = a CDP-1,2-diacyl-sn-glycerol + diphosphate. It carries out the reaction 1-octadecanoyl-2-(5Z,8Z,11Z,14Z-eicosatetraenoyl)-sn-glycero-3-phosphate + CTP + H(+) = 1-octadecanoyl-2-(5Z,8Z,11Z,14Z-eicosatetraenoyl)-sn-glycero-3-cytidine-5'-diphosphate + diphosphate. The catalysed reaction is 1-octadecanoyl-2-(9Z,12Z-octadecadienoyl)-sn-glycero-3-phosphate + CTP + H(+) = 1-octadecanoyl-2-(9Z,12Z-octadecadienoyl)-sn-glycero-3-cytidine-5'-diphosphate + diphosphate. It catalyses the reaction 1-hexadecanoyl-2-(5Z,8Z,11Z,14Z-eicosatetraenoyl)-sn-glycero-3-phosphate + CTP + H(+) = 1-hexadecanoyl-2-(5Z,8Z,11Z,14Z-eicosatetraenoyl)-sn-glycero-3-cytidine-5'-diphosphate + diphosphate. The enzyme catalyses 1,2-di-(5Z,8Z,11Z,14Z)-eicosatetraenoyl-sn-glycero-3-phosphate + CTP + H(+) = 1,2-di-(5Z,8Z,11Z,14Z-eicosatetraenoyl)-sn-glycero-3-cytidine-5'-diphosphate + diphosphate. It carries out the reaction 1-octadecanoyl-2-(9Z-octadecenoyl)-sn-glycero-3-phosphate + CTP + H(+) = 1-octadecanoyl-2-(9Z-octadecenoyl)-sn-glycero-3-cytidine-5'-diphosphate + diphosphate. The catalysed reaction is 1-octadecanoyl-2-(4Z,7Z,10Z,13Z,16Z,19Z-docosahexaenoyl)-sn-glycero-3-phosphate + CTP + H(+) = 1-octadecanoyl-2-(4Z,7Z,10Z,13Z,16Z,19Z-docosahexaenoyl)-sn-glycero-3-cytidine-5'-diphosphate + diphosphate. It catalyses the reaction 1,2-di-(9Z,12Z-octadecadienoyl)-sn-glycero-3-phosphate + CTP + H(+) = 1,2-di-(9Z,12Z-octadecadienoyl)-sn-glycero-3-cytidine-5'-diphosphate + diphosphate. The enzyme catalyses 1,2-di-(9Z-octadecenoyl)-sn-glycero-3-phosphate + CTP + H(+) = 1,2-di-(9Z-octadecenoyl)-sn-glycero-3-cytidine-5'-diphosphate + diphosphate. The protein operates within phospholipid metabolism; CDP-diacylglycerol biosynthesis; CDP-diacylglycerol from sn-glycerol 3-phosphate: step 3/3. In terms of biological role, catalyzes the conversion of phosphatidic acid (PA) to CDP-diacylglycerol (CDP-DAG), an essential intermediate in the synthesis of phosphatidylglycerol, cardiolipin and phosphatidylinositol. Exhibits specificity for the nature of the acyl chains at the sn-1 and sn-2 positions in the substrate, PA and the preferred acyl chain composition is 1-stearoyl-2-arachidonoyl-sn-phosphatidic acid. Plays an important role in regulating the growth and maturation of lipid droplets which are storage organelles at the center of lipid and energy homeostasis. In Rattus norvegicus (Rat), this protein is Phosphatidate cytidylyltransferase 2.